The primary structure comprises 203 residues: tRNA (guanine-N(7)-)-methyltransferase (203 aa).

S-adenosyl-L-methionine-binding residues include E34, E59, D86, and D107. D107 is a catalytic residue. Substrate contacts are provided by residues K111, D143, and 181-184; that span reads TSYE.

Belongs to the class I-like SAM-binding methyltransferase superfamily. TrmB family.

It carries out the reaction guanosine(46) in tRNA + S-adenosyl-L-methionine = N(7)-methylguanosine(46) in tRNA + S-adenosyl-L-homocysteine. It functions in the pathway tRNA modification; N(7)-methylguanine-tRNA biosynthesis. Catalyzes the formation of N(7)-methylguanine at position 46 (m7G46) in tRNA. The protein is tRNA (guanine-N(7)-)-methyltransferase of Mycoplasmopsis pulmonis (strain UAB CTIP) (Mycoplasma pulmonis).